Consider the following 446-residue polypeptide: Cytochrome P450 monooxygenase ptmP (446 aa).

A helical membrane pass occupies residues 19-39 (VTVIWILMALVLLAYLILPNP). Residue Cys385 participates in heme binding. Asn430 is a glycosylation site (N-linked (GlcNAc...) asparagine).

The protein belongs to the cytochrome P450 family. It depends on heme as a cofactor.

The protein resides in the membrane. It functions in the pathway secondary metabolite biosynthesis. Cytochrome P450 monooxygenase; part of the gene cluster that mediates the biosynthesis of the indole diterpenes penitrems. The geranylgeranyl diphosphate (GGPP) synthase ptmG catalyzes the first step in penitrem biosynthesis via conversion of farnesyl pyrophosphate and isopentyl pyrophosphate into geranylgeranyl pyrophosphate (GGPP). Condensation of indole-3-glycerol phosphate with GGPP by the prenyl transferase ptmC then forms 3-geranylgeranylindole (3-GGI). Epoxidation by the FAD-dependent monooxygenase ptmM leads to a epoxidized-GGI that is substrate of the terpene cyclase ptmB for cyclization to yield paspaline. Paspaline is subsequently converted to 13-desoxypaxilline by the cytochrome P450 monooxygenase ptmP, the latter being then converted to paxilline by the cytochrome P450 monooxygenase ptmQ. Paxilline is converted to beta-paxitriol via C-10 ketoreduction by the short-chain dehydrogenase ptmH which can be monoprenylated at the C-20 by the indole diterpene prenyltransferase ptmD. A two-step elimination (acetylation and elimination) process performed by the O-acetyltransferase ptmV and ptmI leads to the production of the prenylated form of penijanthine. The FAD-linked oxidoreductase ptmO then converts the prenylated form of penijanthine into PC-M5 which is in turn transformed into PC-M4 by the aromatic dimethylallyltransferase ptmE. Five sequential oxidative transformations performed by the cytochrome P450 monooxygenases ptmK, ptmU, ptmL, ptmN and ptmJ yield the various penitrem compounds. PtmK, ptmU and ptmM are involved in the formation of the key bicyclic ring of penitrem C via the formation of the intermediates secopenitrem D and penitrem D. PtmL catalyzes the epoxidation of penitrem D and C to yield penitrem B and F, respectively. PtmJ catalyzes the last benzylic hydroxylation to convert penitrem B to prenitrem E and penitrem F to penitrem A. The protein is Cytochrome P450 monooxygenase ptmP of Penicillium ochrochloron.